Consider the following 592-residue polypeptide: Laccase PFICI_06862 (592 aa).

Residues 1-19 form the signal peptide; the sequence is MYIQTQFASLLLLAGTSLA. A glycan (N-linked (GlcNAc...) asparagine) is linked at N26. 2 consecutive Plastocyanin-like domains span residues 32 to 142 and 173 to 350; these read QWSS…WIAP and VVIS…RYPG. The Cu cation site is built by H78, H80, H123, and H125. 3 N-linked (GlcNAc...) asparagine glycosylation sites follow: N370, N407, and N454. The Plastocyanin-like 3 domain maps to 445-563; that stretch reads SDVQGGSMQN…AGQQVVLLEG (119 aa). H475 is a Cu cation binding site. The N-linked (GlcNAc...) asparagine glycan is linked to N524.

This sequence belongs to the multicopper oxidase family.

It is found in the cell surface. Its pathway is pigment biosynthesis; melanin biosynthesis. In terms of biological role, laccase involved the biosynthesis of dihydroxynaphthalene (DHN)-melanin, a bluish-green pigment forming a dark layer in the conidial wall that protects the conidia from UV radiations. The first step of the pathway is the production of the pentaketide 1,3,6,8-tetrahydroxynaphthalene (1,3,6,8-THN or T4HN) by the polyketide synthase PfmaE though condensation of acetyl-CoA with malonyl-CoA. T4HN is not stable and easily oxidizes into the stable form flaviolin. T4HN is also substrate of the hydroxynaphthalene reductase PfmaG to yield scytalone. The scytalone dehydratase PfmaJ then reduces scytalone to 1,3,8-THN. 1,3,8-THN is then substrate of the hydroxynaphthalene reductase PfmaI to yield vermelone. Vermelone is further converted by the multicopper oxidase PfmaD to 1,8-DHN. Finally the laccase PFICI_06862 transforms 1,8-DHN to DHN-melanin. The roles of the 5-oxoprolinase PfmaA and the proline iminopeptidase PfmaB within the cluster have not been elucidated yet. The polypeptide is Laccase PFICI_06862 (Pestalotiopsis fici (strain W106-1 / CGMCC3.15140)).